We begin with the raw amino-acid sequence, 312 residues long: Malate dehydrogenase (312 aa).

NAD(+)-binding positions include 7–13 (GAAGGIG) and aspartate 34. The substrate site is built by arginine 81 and arginine 87. Residues asparagine 94 and 117–119 (ITN) each bind NAD(+). Asparagine 119 and arginine 153 together coordinate substrate. Histidine 177 acts as the Proton acceptor in catalysis. Methionine 227 provides a ligand contact to NAD(+).

This sequence belongs to the LDH/MDH superfamily. MDH type 1 family. As to quaternary structure, homodimer.

The enzyme catalyses (S)-malate + NAD(+) = oxaloacetate + NADH + H(+). In terms of biological role, catalyzes the reversible oxidation of malate to oxaloacetate. The sequence is that of Malate dehydrogenase from Escherichia coli (strain SE11).